Consider the following 558-residue polypeptide: MSHEAHNGTKLFKVQFTPDEEVLEHITDKQGVTPQSNTAAQRIVAVKNIIKNDDLHVDEATPESWREQNYVDVLGVDTEDTLQNGPGTGGGDVYSFYTIKRSNKMAQLATEMARTPAKTVSFSVSDNPEEAVSPPANKQTENKTPSKGRKNEFISTTPHRLRKRLSAPSQPSDSESDYSASNSDEELEEKSSAAKTPSKVSQTPGKTPSKKGKKNTASNLVEEYFEAHSSSKVLTSDRTLQRLQTPKLDQETLRKLLDQTPSAFADELHRISKKHEALFYKWMLQLHLGFNIILFGLGSKQSLIEKFRTSLLQDSLHIVINEFFPSITAKSILNSITEEALGHPGAFRSPLDQMDFILQRFKDDPSLELYLLIHNLDSQMLRGEKCQQVLGQLASIPNLHLLASVDHINAPLMWDQSKQSLYNWLWYETTTFGSYIEETSYENSLLVKRSGALALSSLTHVLRSLTPNARGIFRLLAEYQMANKDNPSYTGLSFQDFYQQCREAFLVNSDLTLRAQLTEFRDHKLIRTKKGMDGVEYLLIPLDLGTLTDFLEMEDKDT.

The disordered stretch occupies residues 119-216 (TVSFSVSDNP…TPSKKGKKNT (98 aa)). Residues 136-145 (ANKQTENKTP) show a composition bias toward polar residues. Low complexity predominate over residues 169-182 (SQPSDSESDYSASN). Polar residues predominate over residues 193–202 (AAKTPSKVSQ).

The protein belongs to the ORC2 family. ORC is composed of six subunits.

The protein resides in the nucleus. In terms of biological role, component of the origin recognition complex (ORC) that binds origins of replication. DNA-binding is ATP-dependent, however specific DNA sequences that define origins of replication have not been identified so far. ORC is required to assemble the pre-replication complex necessary to initiate DNA replication. The chain is Origin recognition complex subunit 2 (orc2) from Xenopus laevis (African clawed frog).